A 183-amino-acid chain; its full sequence is Potassium-transporting ATPase KdpC subunit (183 aa).

Residues 10–30 form a helical membrane-spanning segment; the sequence is ASLLVLSLVTGVAYPLLVTGI.

The protein belongs to the KdpC family. The system is composed of three essential subunits: KdpA, KdpB and KdpC.

The protein resides in the cell inner membrane. Part of the high-affinity ATP-driven potassium transport (or Kdp) system, which catalyzes the hydrolysis of ATP coupled with the electrogenic transport of potassium into the cytoplasm. This subunit acts as a catalytic chaperone that increases the ATP-binding affinity of the ATP-hydrolyzing subunit KdpB by the formation of a transient KdpB/KdpC/ATP ternary complex. This Pseudomonas aeruginosa (strain UCBPP-PA14) protein is Potassium-transporting ATPase KdpC subunit.